The sequence spans 599 residues: Endoribonuclease ZC3H12A (599 aa).

The disordered stretch occupies residues 1–40 (MSGPCGEKPVLEASPTMSLWEFEDSHSRQGTPRPGQELAA). Residues 42-87 (EASALELQMKVDFFRKLGYSSTEIHSVLQKLGVQADTNTVLGELVK) are ubiquitin association domain. Positions 81 to 150 (VLGELVKHGT…DGSNVAMSHG (70 aa)) are necessary for interaction with TANK. The tract at residues 90 to 133 (TATERERQTSPDPCPQLPLVPRGGGTPKAPNLEPPLPEEEKEGS) is disordered. Residue serine 99 is modified to Phosphoserine. The tract at residues 112 to 297 (GGGTPKAPNL…LDNFLRKKPL (186 aa)) is RNase. The RNase NYN domain occupies 135-290 (LRPVVIDGSN…LGRHGPSLDN (156 aa)). The segment at 214 to 220 (RRVGGKR) is RNA binding. Aspartate 226 lines the Mg(2+) pocket. The C3H1-type zinc finger occupies 301–324 (HRKQPCPYGRKCTYGIKCRFFHPE). Positions 301-457 (HRKQPCPYGR…SELWGVRGGG (157 aa)) are necessary for interaction with ZC3H12D. A disordered region spans residues 343-420 (LSPPRAPSKD…SGSSFGPTDW (78 aa)). Residue serine 344 is modified to Phosphoserine. Positions 358-375 (PSPSSQSSSLLTESEQCS) are enriched in low complexity. A compositionally biased stretch (polar residues) spans 386–399 (SPGSRQEGLTQTYA). 2 positions are modified to phosphoserine: serine 438 and serine 442. Positions 522-546 (PPPTSVLQEPPVQSPGAGRSPWGRA) are disordered.

The protein belongs to the ZC3H12 family. As to quaternary structure, oligomer. Found in a deubiquitination complex with TANK, USP10 and ZC3H12A; this complex inhibits genotoxic stress- or interleukin-1-beta-mediated NF-kappaB activation by promoting IKBKG or TRAF6 deubiquitination. Interacts with IKBKG; this interaction increases in response to DNA damage. Interacts with TANK; this interaction increases in response to DNA damage and serves as a bridge to anchor both TANK and USP10 into a deubiquitinating complex. Interacts with TRAF6; this interaction increases in response to DNA damage and is stimulated by TANK. Interacts with USP10; this interaction increases in response to DNA damage and serves as a bridge to anchor both TANK and USP10 into a deubiquitinating complex. Interacts with ZC3H12D. Interacts with TNRC6A. Interacts with IKBKB/IKKB. Interacts with IKBKB/IKKB. Interacts with BTRC; the interaction occurs when ZC3H12A is phosphorylated in a IKBKB/IKKB-dependent manner. Interacts with IRAK1; this interaction increases the interaction between ZC3H12A and IKBKB/IKKB. Interacts with UPF1; this interaction occurs in a mRNA translationally active- and termination-dependent manner and is essential for ZC3H12A-mediated degradation of target mRNAs. Associates with ribosomes. Interacts with ubiquitin. (Microbial infection) Oligomerization is necessary for antiviral activity. Mg(2+) serves as cofactor. Phosphorylated by IRAK1; phosphorylation is necessary for subsequent phosphorylation by the I-kappa-B-kinase (IKK) complex. Phosphorylated by I-kappa-B-kinase (IKK) subunits IKBKB/IKKB and CHUK/IKKA at Ser-438 and Ser-442; these phosphorylations promote ubiquitin proteasome-mediated degradation of ZC3H12A and hence facilitates rapid and robust production of IL-6 mRNA in response to toll-like receptor (TLR) or IL-1 receptor stimuli. Post-translationally, (Microbial infection) Rapidly degraded in activated T-cells in response to phorbol 13-acetate 12-myristate (PMA) during HIV-1 viral infection. In terms of processing, ubiquitinated; ubiquitination is induced in response to interleukin IL1 receptor stimuli in a IKBKB/IKKB and IRAK1-dependent manner, leading to proteasome-mediated degradation. Proteolytically cleaved between Arg-111 and Arg-214 by MALT1 in activated T-cells; cleavage at Arg-111 is critical for promoting ZC3H12A degradation in response to T-cell receptor (TCR) stimulation, and hence is necessary for prolonging the stability of a set of mRNAs controlling T-cell activation and Th17 cell differentiation. Expressed in heart, placenta, spleen, kidney, liver and lung. Expressed in leukocytes. Expressed in monocyte.

It is found in the nucleus. It localises to the cytoplasm. Its subcellular location is the P-body. The protein localises to the rough endoplasmic reticulum membrane. The protein resides in the cytoplasmic granule. In terms of biological role, endoribonuclease involved in various biological functions such as cellular inflammatory response and immune homeostasis, glial differentiation of neuroprogenitor cells, cell death of cardiomyocytes, adipogenesis and angiogenesis. Functions as an endoribonuclease involved in mRNA decay. Modulates the inflammatory response by promoting the degradation of a set of translationally active cytokine-induced inflammation-related mRNAs, such as IL6 and IL12B, during the early phase of inflammation. Prevents aberrant T-cell-mediated immune reaction by degradation of multiple mRNAs controlling T-cell activation, such as those encoding cytokines (IL6 and IL2), cell surface receptors (ICOS, TNFRSF4 and TNFR2) and transcription factor (REL). Inhibits cooperatively with ZC3H12A the differentiation of helper T cells Th17 in lungs. They repress target mRNA encoding the Th17 cell-promoting factors IL6, ICOS, REL, IRF4, NFKBID and NFKBIZ. The cooperation requires RNA-binding by RC3H1 and the nuclease activity of ZC3H12A. Together with RC3H1, destabilizes TNFRSF4/OX40 mRNA by binding to the conserved stem loop structure in its 3'UTR. Self regulates by destabilizing its own mRNA. Cleaves mRNA harboring a stem-loop (SL), often located in their 3'-UTRs, during the early phase of inflammation in a helicase UPF1-dependent manner. Plays a role in the inhibition of microRNAs (miRNAs) biogenesis. Cleaves the terminal loop of a set of precursor miRNAs (pre-miRNAs) important for the regulation of the inflammatory response leading to their degradation, and thus preventing the biosynthesis of mature miRNAs. Also plays a role in promoting angiogenesis in response to inflammatory cytokines by inhibiting the production of antiangiogenic microRNAs via its anti-dicer RNase activity. Affects the overall ubiquitination of cellular proteins. Positively regulates deubiquitinase activity promoting the cleavage at 'Lys-48'- and 'Lys-63'-linked polyubiquitin chains on TNF receptor-associated factors (TRAFs), preventing JNK and NF-kappa-B signaling pathway activation, and hence negatively regulating macrophage-mediated inflammatory response and immune homeostasis. Also induces deubiquitination of the transcription factor HIF1A, probably leading to its stabilization and nuclear import, thereby positively regulating the expression of proangiogenic HIF1A-targeted genes. Involved in a TANK-dependent negative feedback response to attenuate NF-kappaB activation through the deubiquitination of IKBKG or TRAF6 in response to interleukin-1-beta (IL1B) stimulation or upon DNA damage. Prevents stress granule (SGs) formation and promotes macrophage apoptosis under stress conditions, including arsenite-induced oxidative stress, heat shock and energy deprivation. Plays a role in the regulation of macrophage polarization; promotes IL4-induced polarization of macrophages M1 into anti-inflammatory M2 state. May also act as a transcription factor that regulates the expression of multiple genes involved in inflammatory response, angiogenesis, adipogenesis and apoptosis. Functions as a positive regulator of glial differentiation of neuroprogenitor cells through an amyloid precursor protein (APP)-dependent signaling pathway. Attenuates septic myocardial contractile dysfunction in response to lipopolysaccharide (LPS) by reducing I-kappa-B-kinase (IKK)-mediated NF-kappa-B activation, and hence myocardial pro-inflammatory cytokine production. Functionally, (Microbial infection) Binds to Japanese encephalitis virus (JEV) and Dengue virus (DEN) RNAs. Its function is as follows. (Microbial infection) Exhibits antiviral activity against HIV-1 in lymphocytes by decreasing the abundance of HIV-1 viral RNA species. This is Endoribonuclease ZC3H12A from Homo sapiens (Human).